A 339-amino-acid chain; its full sequence is Holliday junction branch migration complex subunit RuvB (339 aa).

The segment at 2-187 (KDVNDEERII…FGIIEHMQYY (186 aa)) is large ATPase domain (RuvB-L). Residues leucine 26, arginine 27, glycine 68, lysine 71, threonine 72, threonine 73, 134-136 (EDF), arginine 177, tyrosine 187, and arginine 224 contribute to the ATP site. Mg(2+) is bound at residue threonine 72. A small ATPAse domain (RuvB-S) region spans residues 188 to 258 (SIDDLEKIIQ…TTKHSLHLLE (71 aa)). The interval 261 to 339 (DEGLDQTDRK…QLGYPPKKAE (79 aa)) is head domain (RuvB-H). DNA-binding residues include arginine 316 and arginine 321.

It belongs to the RuvB family. As to quaternary structure, homohexamer. Forms an RuvA(8)-RuvB(12)-Holliday junction (HJ) complex. HJ DNA is sandwiched between 2 RuvA tetramers; dsDNA enters through RuvA and exits via RuvB. An RuvB hexamer assembles on each DNA strand where it exits the tetramer. Each RuvB hexamer is contacted by two RuvA subunits (via domain III) on 2 adjacent RuvB subunits; this complex drives branch migration. In the full resolvosome a probable DNA-RuvA(4)-RuvB(12)-RuvC(2) complex forms which resolves the HJ.

Its subcellular location is the cytoplasm. The catalysed reaction is ATP + H2O = ADP + phosphate + H(+). Its function is as follows. The RuvA-RuvB-RuvC complex processes Holliday junction (HJ) DNA during genetic recombination and DNA repair, while the RuvA-RuvB complex plays an important role in the rescue of blocked DNA replication forks via replication fork reversal (RFR). RuvA specifically binds to HJ cruciform DNA, conferring on it an open structure. The RuvB hexamer acts as an ATP-dependent pump, pulling dsDNA into and through the RuvAB complex. RuvB forms 2 homohexamers on either side of HJ DNA bound by 1 or 2 RuvA tetramers; 4 subunits per hexamer contact DNA at a time. Coordinated motions by a converter formed by DNA-disengaged RuvB subunits stimulates ATP hydrolysis and nucleotide exchange. Immobilization of the converter enables RuvB to convert the ATP-contained energy into a lever motion, pulling 2 nucleotides of DNA out of the RuvA tetramer per ATP hydrolyzed, thus driving DNA branch migration. The RuvB motors rotate together with the DNA substrate, which together with the progressing nucleotide cycle form the mechanistic basis for DNA recombination by continuous HJ branch migration. Branch migration allows RuvC to scan DNA until it finds its consensus sequence, where it cleaves and resolves cruciform DNA. In Lactobacillus gasseri (strain ATCC 33323 / DSM 20243 / BCRC 14619 / CIP 102991 / JCM 1131 / KCTC 3163 / NCIMB 11718 / NCTC 13722 / AM63), this protein is Holliday junction branch migration complex subunit RuvB.